A 245-amino-acid polypeptide reads, in one-letter code: Dehydrogenase/reductase SDR family member 6 (245 aa).

Residues 16-18 (QGI), Asp-37, and Asp-58 contribute to the NAD(+) site. Position 144 (Arg-144) interacts with substrate. Residue Tyr-147 is the Proton acceptor of the active site. Residues Lys-151 and 180 to 184 (VDTPS) each bind NAD(+). Residues Arg-188 and Arg-205 each coordinate substrate.

Belongs to the short-chain dehydrogenases/reductases (SDR) family. Homotetramer.

The protein localises to the cytoplasm. The catalysed reaction is cis-4-hydroxy-L-proline + NAD(+) = 4-oxo-L-proline + NADH + H(+). It carries out the reaction (R)-3-hydroxybutanoate + NAD(+) = acetoacetate + NADH + H(+). It participates in amino-acid metabolism. It functions in the pathway siderophore biosynthesis. In terms of biological role, NAD(H)-dependent dehydrogenase/reductase with a preference for cyclic substrates. Catalyzes stereoselective conversion of 4-oxo-L-proline to cis-4-hydroxy-L-proline, likely a detoxification mechanism for ketoprolines. Mediates the formation of 2,5-dihydroxybenzoate (2,5-DHBA), a siderophore that chelates free cytoplasmic iron and associates with LCN2, thereby regulating iron transport and homeostasis while protecting cells against free radical-induced oxidative stress. The iron-siderophore complex is imported into mitochondria, providing an iron source for mitochondrial metabolic processes in particular heme synthesis. May act as a 3-hydroxybutyrate dehydrogenase. The sequence is that of Dehydrogenase/reductase SDR family member 6 from Rattus norvegicus (Rat).